The following is a 180-amino-acid chain: MQNPQNLIWIDLEMTGLDPENDVIIEMATIVTDSDLNTLAEGPVIAIHHSDEVLARMDEWNTRTHGNSGLTQRVRESRVSMAEAEAETIAFLEQWVPKGKSPICGNSICQDRRFLYTHMKALESYFHYRNLDVSTLKELAARWAPDVRDSFKKGSTHLALDDIRESIAELQHYRKHFIKF.

In terms of domain architecture, Exonuclease spans 7–170 (LIWIDLEMTG…DDIRESIAEL (164 aa)). Residue Tyr128 is part of the active site.

Belongs to the oligoribonuclease family.

The protein resides in the cytoplasm. Functionally, 3'-to-5' exoribonuclease specific for small oligoribonucleotides. The polypeptide is Oligoribonuclease (Pseudomonas fluorescens (strain Pf0-1)).